Here is a 283-residue protein sequence, read N- to C-terminus: uncharacterized protein (283 aa).

6 helical membrane-spanning segments follow: residues Leu28 to Ile48, Leu65 to Leu85, Leu113 to Val133, Ile135 to Ile155, Leu200 to Val220, and Ile246 to Ala266.

To M.jannaschii MJ0233.

It is found in the cell membrane. This is an uncharacterized protein from Methanocaldococcus jannaschii (strain ATCC 43067 / DSM 2661 / JAL-1 / JCM 10045 / NBRC 100440) (Methanococcus jannaschii).